The chain runs to 148 residues: FAD synthase (148 aa).

Residues T11–F12, H16–H19, N94, and Y121 each bind ATP.

Belongs to the archaeal FAD synthase family. In terms of assembly, homodimer. A divalent metal cation serves as cofactor.

The enzyme catalyses FMN + ATP + H(+) = FAD + diphosphate. It functions in the pathway cofactor biosynthesis; FAD biosynthesis; FAD from FMN: step 1/1. In terms of biological role, catalyzes the transfer of the AMP portion of ATP to flavin mononucleotide (FMN) to produce flavin adenine dinucleotide (FAD) coenzyme. This Methanoregula boonei (strain DSM 21154 / JCM 14090 / 6A8) protein is FAD synthase.